Reading from the N-terminus, the 570-residue chain is GTPase Obg (570 aa).

The Obg domain occupies 2–168 (SDFVDRVTVH…RDIILELKSI (167 aa)). A disordered region spans residues 15-43 (GDGGNGSAGIRREKYKPLAGPNGGNGGKG). Residues 169–349 (ADVALVGFPS…LNFALAKLVK (181 aa)) enclose the OBG-type G domain. Residues 175–182 (GFPSAGKS), 200–204 (FTTLV), 221–224 (DVPG), 301–304 (NKID), and 330–332 (STA) contribute to the GTP site. Residues Ser182 and Thr202 each coordinate Mg(2+). Positions 382–468 (GRNAQVREFE…ERAVAFDWDP (87 aa)) constitute an OCT domain. Residues 521-570 (RAAMQAERAAGHWADPSIDDDRHDEQSLFGRGEVEEYEDEPGADGSRQLD) form a disordered region.

The protein belongs to the TRAFAC class OBG-HflX-like GTPase superfamily. OBG GTPase family. In terms of assembly, monomer. Mg(2+) serves as cofactor.

The protein resides in the cytoplasm. In terms of biological role, an essential GTPase which binds GTP, GDP and possibly (p)ppGpp with moderate affinity, with high nucleotide exchange rates and a fairly low GTP hydrolysis rate. Plays a role in control of the cell cycle, stress response, ribosome biogenesis and in those bacteria that undergo differentiation, in morphogenesis control. This Bifidobacterium animalis subsp. lactis (strain AD011) protein is GTPase Obg.